Reading from the N-terminus, the 465-residue chain is MKTLLIFLAFLSSIFASLIGLTPPSKDSFYSPPVGFATAKPGDILKIRNTPSAPSSLYLPIVVKNAWQLLIRSEDSFGNPNAFVATLIQPLNANPSKLVSYQSWEDASHIDCSPSYGMQFKSPATTVTTQIDMTLIVPLLQNGYYVIIPDYEGPKSTFTVGRQSGKATLNSIRAALQTGAFSGIKKTAKVALWGYSGGSLATGWAISLQSKYAPELKENLIGAAVGGFATNITAVAEAVDGTVFSGFIPLALNGLANEYPDFKKRLYGEVKLSARSTMEKGSQNCLAASLVGYPMSQYFTGQNRAFEKGWGLLQDEVFNKTIEDNLLLKLDKTYLPQVPVLIYHGTIDEIIPIKDANAQYQIWCDRGIQSLEFAEDLSAGHLAETFTGAPAALSWIDARFSGKPAVNGCQRTIRSSNVLYPGISITIRIYFEGISKTIFGVNLGSGVNADKSISNKFFAYIRKYI.

The first 16 residues, 1–16, serve as a signal peptide directing secretion; that stretch reads MKTLLIFLAFLSSIFA. Cysteines 112 and 285 form a disulfide. S196 acts as the Charge relay system in catalysis. N-linked (GlcNAc...) asparagine glycosylation is found at N231 and N319. Catalysis depends on charge relay system residues D348 and H381. An intrachain disulfide couples C364 to C409.

It belongs to the AB hydrolase superfamily. Lipase family. Class Lip subfamily.

The protein localises to the secreted. It catalyses the reaction a triacylglycerol + H2O = a diacylglycerol + a fatty acid + H(+). Its function is as follows. Secreted lipase that is able to hydrolyze both the neutral triacylglycerols and the monopalmitate ester Tween 40, allowing the use of hydrolyzed products as carbon sources. Has broad lipolytic activity, which may be important for colonization and subsequent infection, therefore contributing to the persistence and virulence in human tissue. In Candida albicans (strain SC5314 / ATCC MYA-2876) (Yeast), this protein is Lipase 10.